A 463-amino-acid chain; its full sequence is uncharacterized protein (463 aa).

The next 11 membrane-spanning stretches (helical) occupy residues 6 to 26, 31 to 51, 60 to 80, 101 to 123, 130 to 152, 189 to 209, 242 to 262, 269 to 289, 304 to 324, 413 to 433, and 443 to 463; these read ILPV…FMLL, TFIS…SLSA, FIYA…IVSM, VRGP…LFFW, LIGA…AAMA, ASIP…FIMI, SILA…MLLF, ATAL…FFVY, GFKF…FFYL, AIWV…AAIC, and KNFI…VMML.

It localises to the cell membrane. This is an uncharacterized protein from Bacillus subtilis (strain 168).